The sequence spans 417 residues: MDFCWKREMEGKLAHDHRGMTSPRRICVVTGPVIVGAGPSGLATAACLKERGITSVLLERSNCIASLWQLKTYDRLHLHLPKQFCELPIIPFPGDFPTYPTKQQFIEYLEDYARRFDIKPEFNQTVESAAFDENLGMWRVTSVGEEGTTEYVCRWLVAATGENAEPVVPRFEGMDKFAAAGVVKHTCHYKTGGDFAGKRVLVVGCGNSGMEVCLDLCNFGAQPSLVVRDAVHVLPREMLGTSTFGLSMFLLKWLPIRLVDRFLLVVSRFILGDTTLLGLNRPRLGPLELKNISGKTPVLDVGTLAKIKTGDIKVCSGIRRLKRHEVEFDNGKTERFDAIILATGYKSNVPSWLKENKMFSKKDGFPIQEFPEGWRGECGLYAVGFTKRGISGASMDAKRIAEDIHKCWKQDEQVKKI.

Residue 36-41 participates in FAD binding; that stretch reads GAGPSG. NADP(+) is bound at residue 204–209; that stretch reads GCGNSG.

It belongs to the FMO family. FAD serves as cofactor. As to expression, highly expressed in roots but modestly expressed in the cauline leaves and flowers. Expressed in anthers.

The protein localises to the cytoplasm. It carries out the reaction indole-3-pyruvate + NADPH + O2 + H(+) = (indol-3-yl)acetate + CO2 + NADP(+) + H2O. It functions in the pathway plant hormone metabolism; auxin biosynthesis. Involved in auxin biosynthesis via the indole-3-pyruvic acid (IPA) pathway. Also able to convert in vitro phenyl pyruvate (PPA) to phenyl acetic acid (PAA). Required for the formation of floral organs and vascular tissues. Belongs to the set of redundant YUCCA genes probably responsible for auxin biosynthesis in shoots. The chain is Indole-3-pyruvate monooxygenase YUCCA6 (YUC6) from Arabidopsis thaliana (Mouse-ear cress).